Here is a 399-residue protein sequence, read N- to C-terminus: LIM/homeobox protein Lhx5 (399 aa).

2 consecutive LIM zinc-binding domains span residues V3 to G61 and T62 to I125. Disordered stretches follow at residues C136–T185 and P301–W399. The span at D151–N167 shows a compositional bias: basic and acidic residues. Positions R180–K239 form a DNA-binding region, homeobox.

The protein resides in the nucleus. Probably involved in the patterning of the nervous system, in particular in the early specification of the diencephalon. The sequence is that of LIM/homeobox protein Lhx5 (lhx5) from Danio rerio (Zebrafish).